The primary structure comprises 1070 residues: DNA-directed RNA polymerase subunit beta (1070 aa).

It belongs to the RNA polymerase beta chain family. In terms of assembly, in plastids the minimal PEP RNA polymerase catalytic core is composed of four subunits: alpha, beta, beta', and beta''. When a (nuclear-encoded) sigma factor is associated with the core the holoenzyme is formed, which can initiate transcription.

It localises to the plastid. The protein resides in the chloroplast. It carries out the reaction RNA(n) + a ribonucleoside 5'-triphosphate = RNA(n+1) + diphosphate. Its function is as follows. DNA-dependent RNA polymerase catalyzes the transcription of DNA into RNA using the four ribonucleoside triphosphates as substrates. The polypeptide is DNA-directed RNA polymerase subunit beta (Liriodendron tulipifera (Tuliptree)).